A 513-amino-acid polypeptide reads, in one-letter code: GMP synthase [glutamine-hydrolyzing] (513 aa).

Residues 3-200 (SVLVLDFGSQ…LITIAGITPD (198 aa)) form the Glutamine amidotransferase type-1 domain. The active-site Nucleophile is the cysteine 80. Catalysis depends on residues histidine 174 and glutamate 176. The GMPS ATP-PPase domain maps to 201–388 (WSSKSFIEHQ…LGIAEDILMR (188 aa)). 228–234 (SGGVDST) is an ATP binding site.

As to quaternary structure, homodimer.

It carries out the reaction XMP + L-glutamine + ATP + H2O = GMP + L-glutamate + AMP + diphosphate + 2 H(+). It participates in purine metabolism; GMP biosynthesis; GMP from XMP (L-Gln route): step 1/1. Its function is as follows. Catalyzes the synthesis of GMP from XMP. The polypeptide is GMP synthase [glutamine-hydrolyzing] (Pelodictyon phaeoclathratiforme (strain DSM 5477 / BU-1)).